The chain runs to 220 residues: Protein US2 homolog (220 aa).

Belongs to the herpesviridae US2 family.

The sequence is that of Protein US2 homolog from Bovine herpesvirus 1.2 (strain ST) (BoHV-1).